We begin with the raw amino-acid sequence, 514 residues long: FAD-dependent monooxygenase CPUR_05423 (514 aa).

Residues V79 and R146 each coordinate FAD. R227 is an active-site residue. FAD contacts are provided by D358 and G371.

This sequence belongs to the paxM FAD-dependent monooxygenase family. It depends on FAD as a cofactor.

Its pathway is pigment biosynthesis. Functionally, FAD-dependent monooxygenase; part of the ergochrome gene cluster responsible for the typical purple-black color of the ergot sclerotia. The ergochrome gene cluster produces several ergot pigments including the yellow ergochrome secalonic acid and its derivatives, as well as the red anthraquinones endocrocin and clavorubin. The pathway begins with the synthesis of atrochrysone thioester by the polyketide synthase (PKS) CPUR_05437. The atrochrysone carboxyl ACP thioesterase CPUR_05436 then breaks the thioester bond and releases the atrochrysone carboxylic acid from CPUR_05437. The atrochrysone carboxylic acid is then converted to atrochrysone which is further transformed into emodin anthrone. The next step is performed by the anthrone oxygenase CPUR_05434 that catalyzes the oxidation of emodinanthrone to emodin. Emodin is further modified to yield monodictyphenone via several steps involving CPUR_05427, CPUR_05428, CPUR_05429 and CPUR_05430. The short chain dehydrogenase/reductase CPUR_05418 then catalyzes the C-5 ketoreduction to give the xanthone skeleton of the monomeric units. Ergochromes formation requires further dimerization steps of different xanthone units, probably catalyzed by the cytochrome P450 monooxygenase CPUR_05419. CPUR_05425, CPUR_05426 and CPUR_05431 are unique to Claviceps, thus it is likely that they are involved in further modification of xanthone units or in their dimerization. The yellow ergochromes and the red anthraquinone pigments endocrocin and clavorubin are products from the same PKS derived precursors and the latter are likely shunt products in the pathway of xanthone biosynthesis. It is proposed that atrochrysone carboxylic acid released from the PKS CPUR_05437 can also be converted to endocrocin anthrone which is further oxidized into endocrocin by CPUR_05435. Endocrocin could be then modified to clavorubin, possibly by CPUR_05423 and CPUR_05431. Clavorubin is the principal anthraquinone metabolite produced by the cluster with a much higher yield compared to endocrocin. The sequence is that of FAD-dependent monooxygenase CPUR_05423 from Claviceps purpurea (strain 20.1) (Ergot fungus).